A 241-amino-acid polypeptide reads, in one-letter code: MIDLTGKTSLITGASGGIGGAIARLLHKLGSHVIISGSNEEKLQSLGKVVKDNYTIEVCNLADKEECRNLISKASKLDILVCNAGITSDTLAIRMKDEDFDKVIDINLKANFILNREAIKKMIQNRYGRIINISSIVGISGNPGQANYCASKAGLIGMTKSLSYEVATRGITVNTVAPGFIKSDMTDKLNEKQREAIVQKIPLGTYGMPEDVAHAVAFLASDQASYITGQTIHVNGGMLMV.

Residues 13-16 (GASG), S38, 57-58 (EV), and N83 each bind NADP(+). Position 135 (S135) interacts with substrate. Catalysis depends on Y148, which acts as the Proton acceptor. Residues 148–152 (YCASK) and I181 contribute to the NADP(+) site.

It belongs to the short-chain dehydrogenases/reductases (SDR) family. In terms of assembly, homotetramer.

It carries out the reaction a (3R)-hydroxyacyl-[ACP] + NADP(+) = a 3-oxoacyl-[ACP] + NADPH + H(+). It functions in the pathway lipid metabolism; fatty acid biosynthesis. Its function is as follows. Catalyzes the NADPH-dependent reduction of beta-ketoacyl-ACP substrates to beta-hydroxyacyl-ACP products, the first reductive step in the elongation cycle of fatty acid biosynthesis. The protein is 3-oxoacyl-[acyl-carrier-protein] reductase FabG (fabG) of Rickettsia conorii (strain ATCC VR-613 / Malish 7).